The primary structure comprises 503 residues: Maturase K (503 aa).

The protein belongs to the intron maturase 2 family. MatK subfamily.

Its subcellular location is the plastid. It is found in the chloroplast. Usually encoded in the trnK tRNA gene intron. Probably assists in splicing its own and other chloroplast group II introns. This Agonis flexuosa (Australian willow myrtle) protein is Maturase K.